Reading from the N-terminus, the 334-residue chain is DNA polymerase III subunit delta' (334 aa).

In terms of assembly, the DNA polymerase III holoenzyme complex contains at least 10 different subunits organized into 3 functionally essential subassemblies: the Pol III core, the beta sliding clamp processivity factor and the clamp-loading complex. The Pol III core (subunits alpha, epsilon and theta) contains the polymerase and the 3'-5' exonuclease proofreading activities. The polymerase is tethered to the template via the dimeric beta sliding clamp processivity factor. The clamp-loading complex (also called gamma complex) assembles the beta sliding clamp onto the primed template and plays a central role in the organization and communication at the replication fork. The clamp-loading complex contains delta, delta', psi and chi, and 3 copies of either or both of two different DnaX proteins, gamma and tau. The DNA replisome complex has a single clamp loader (3 tau and 1 each of delta, delta', psi and chi subunits) which binds 3 Pol III cores (1 core on the leading strand and 2 on the lagging strand) each with a beta sliding clamp dimer. Additional proteins in the replisome are other copies of gamma, psi and chi, Ssb, DNA helicase and RNA primase. The clamp loader hydrolyzes ATP to assemble the beta processivity factor onto the primed template and plays a central role in the organization and communication at the replication fork; the minimal complex to load the beta sliding clamp on DNA is delta, delta', gamma.

It carries out the reaction DNA(n) + a 2'-deoxyribonucleoside 5'-triphosphate = DNA(n+1) + diphosphate. Part of the beta sliding clamp loading complex, which hydrolyzes ATP to load the beta clamp onto primed DNA to form the DNA replication pre-initiation complex. DNA polymerase III is a complex, multichain enzyme responsible for most of the replicative synthesis in bacteria. This DNA polymerase also exhibits 3' to 5' exonuclease activity. The gamma complex (gamma(3),delta,delta') is thought to load beta dimers onto DNA by binding ATP which alters the complex's conformation so it can bind beta sliding clamp dimers and open them at one interface. Primed DNA is recognized, ATP is hydrolyzed releasing the gamma complex and closing the beta sliding clamp ring around the primed DNA. The chain is DNA polymerase III subunit delta' (holB) from Escherichia coli (strain K12).